The sequence spans 685 residues: Potassium-transporting ATPase ATP-binding subunit (685 aa).

The next 4 membrane-spanning stretches (helical) occupy residues 36–56 (MFVV…PSIF), 68–88 (LIVT…ESVA), 218–238 (IALN…LVAL), and 255–275 (IALL…AIGI). The active-site 4-aspartylphosphate intermediate is the Asp-306. ATP is bound by residues Asp-343, Glu-347, 375 to 382 (FTAQTRMS), and Lys-394. Asp-517 and Asp-521 together coordinate Mg(2+). Helical transmembrane passes span 587–607 (FAII…MNIM), 615–635 (AILS…PIAM), and 654–674 (IVFG…IDMI).

It belongs to the cation transport ATPase (P-type) (TC 3.A.3) family. Type IA subfamily. In terms of assembly, the system is composed of three essential subunits: KdpA, KdpB and KdpC.

It is found in the cell membrane. The catalysed reaction is K(+)(out) + ATP + H2O = K(+)(in) + ADP + phosphate + H(+). Functionally, part of the high-affinity ATP-driven potassium transport (or Kdp) system, which catalyzes the hydrolysis of ATP coupled with the electrogenic transport of potassium into the cytoplasm. This subunit is responsible for energy coupling to the transport system and for the release of the potassium ions to the cytoplasm. The polypeptide is Potassium-transporting ATPase ATP-binding subunit (Clostridium acetobutylicum (strain ATCC 824 / DSM 792 / JCM 1419 / IAM 19013 / LMG 5710 / NBRC 13948 / NRRL B-527 / VKM B-1787 / 2291 / W)).